The following is a 205-amino-acid chain: uncharacterized protein (205 aa).

This sequence belongs to the peptidase C56 family.

This is an uncharacterized protein from Methanocaldococcus jannaschii (strain ATCC 43067 / DSM 2661 / JAL-1 / JCM 10045 / NBRC 100440) (Methanococcus jannaschii).